Consider the following 144-residue polypeptide: UPF0292 protein MA_4098 (144 aa).

In terms of domain architecture, Toprim spans 28 to 109 (GAVIIVEGKR…KPELQIRNKL (82 aa)). Glu34, Asp78, and Asp80 together coordinate Mg(2+).

Belongs to the UPF0292 family. Mg(2+) is required as a cofactor.

The polypeptide is UPF0292 protein MA_4098 (Methanosarcina acetivorans (strain ATCC 35395 / DSM 2834 / JCM 12185 / C2A)).